A 221-amino-acid chain; its full sequence is Redox-sensing transcriptional repressor Rex (221 aa).

The segment at residues Ile17–Phe56 is a DNA-binding region (H-T-H motif). Gly91–Gly96 provides a ligand contact to NAD(+).

Belongs to the transcriptional regulatory Rex family. In terms of assembly, homodimer.

Its subcellular location is the cytoplasm. Functionally, modulates transcription in response to changes in cellular NADH/NAD(+) redox state. The sequence is that of Redox-sensing transcriptional repressor Rex from Oenococcus oeni (strain ATCC BAA-331 / PSU-1).